Here is a 232-residue protein sequence, read N- to C-terminus: Small ribosomal subunit protein uS2 (232 aa).

The protein belongs to the universal ribosomal protein uS2 family.

The polypeptide is Small ribosomal subunit protein uS2 (Carboxydothermus hydrogenoformans (strain ATCC BAA-161 / DSM 6008 / Z-2901)).